The following is a 250-amino-acid chain: Probable transcriptional regulatory protein Mkms_2298 (250 aa).

The protein belongs to the TACO1 family.

The protein resides in the cytoplasm. The polypeptide is Probable transcriptional regulatory protein Mkms_2298 (Mycobacterium sp. (strain KMS)).